We begin with the raw amino-acid sequence, 1235 residues long: MPAGGRAGSLKDPDVAELFFKDDPEKLFSDLREIGHGSFGAVYFARDVRNSEVVAIKKMSYSGKQSNEKWQDIIKEVRFLQKLRHPNTIQYRGCYLREHTAWLVMEYCLGSASDLLEVHKKPLQEVEIAAVTHGALQGLAYLHSHNMIHRDVKAGNILLSEPGLVKLGDFGSASIMAPANSFVGTPYWMAPEVILAMDEGQYDGKVDVWSLGITCIELAERKPPLFNMNAMSALYHIAQNESPALQSGHWSEYFRNFVDSCLQKIPQDRPTSEVLLKHRFVLRERPPTVIMDLIQRTKDAVRELDNLQYRKMKKILFQEAPNGPGAEAPEEEEEAEPYMHRAGTLTSLESSHSVPSMSISASSQSSSVNSLADASDNEEEEEEEEEEEEEEEEEGPESREMAMMQEGEHTVTSHSSIIHRLPGSDNLYDDPYQPEMTPGPLQPPAAPPTSTSSSSARRRAYCRNRDHFATIRTASLVSRQIQEHEQDSALREQLSGYKRMRRQHQKQLLALESRLRGEREEHSGRLQRELEAQRAGFGTEAEKLARRHQAIGEKEARAAQAEERKFQQHILGQQKKELAALLEAQKRTYKLRKEQLKEELQENPSTPKREKAEWLLRQKEQLQQCQAEEEAGLLRRQRQYFELQCRQYKRKMLLARHSLDQDLLREDLNKKQTQKDLECALLLRQHEATRELELRQLQAVQRTRAELTRLQHQTELGNQLEYNKRREQELRQKHAAQVRQQPKSLKVRAGQLPMGLPATGALGPLSTGTLSEEQPCSSGQEAILGQRMLGEEEEAVPERMILGKEGTTLEPEEQRILGEEMGTFSSSPQKHRSLVNEEDWDISKEMKESRVPSLASQERNIIGQEEAGAWNLWEKEHGNLVDMEFKLGWVQGPVLTPVPEEEEEEEEEGGAPIGTPRDPGDGCPSPDIPPEPPPSHLRQYPASQLPGFLSHGLLTGLSFAVGSSSGLLPLLLLLLLPLLAAQGGGGLQAALLALEVGLVGLGASYLFLCTALHLPPSLFLLLAQGTALGAVLSLSWRRGLMGVPLGLGAAWLLAWPSLALPLAAMAAGGKWVRQQGPQMRRGISRLWLRVLLRLSPMVFRALQGCAAVGDRGLFALYPKTNKNGFRSRLPVPWPRQGNPRTTQHPLALLARVWALCKGWNWRLARASHRLASCLPPWAVHILASWGLLKGERPSRIPRLLPRSQRRLGLSASRQLPPGTVAGRRSQTRRALPPWR.

A Phosphoserine modification is found at S9. Residues 28 to 281 (FSDLREIGHG…SEVLLKHRFV (254 aa)) form the Protein kinase domain. ATP-binding positions include 34-42 (IGHGSFGAV) and K57. Residue 106–108 (EYC) participates in staurosporine binding. The Proton acceptor role is filled by D151. Position 155 (G155) interacts with staurosporine. At S181 the chain carries Phosphoserine. A disordered region spans residues 318-457 (QEAPNGPGAE…PTSTSSSSAR (140 aa)). A compositionally biased stretch (low complexity) spans 350–374 (SSHSVPSMSISASSQSSSVNSLADA). Residues 375 to 395 (SDNEEEEEEEEEEEEEEEEEG) show a composition bias toward acidic residues. Residues 396-411 (PESREMAMMQEGEHTV) are compositionally biased toward basic and acidic residues. The residue at position 416 (S416) is a Phosphoserine. 2 coiled-coil regions span residues 488 to 523 (SALR…EEHS) and 576 to 603 (KELA…LQEN). The residue at position 658 (S658) is a Phosphoserine. Residues 683 to 715 (LRQHEATRELELRQLQAVQRTRAELTRLQHQTE) adopt a coiled-coil conformation. S777, S825, and S827 each carry phosphoserine. The interval 892-941 (GPVLTPVPEEEEEEEEEGGAPIGTPRDPGDGCPSPDIPPEPPPSHLRQYP) is disordered. The segment covering 899–909 (PEEEEEEEEEG) has biased composition (acidic residues). Pro residues predominate over residues 926–935 (PDIPPEPPPS). 3 helical membrane passes run 967–987 (LLPL…GGGL), 989–1009 (AALL…LFLC), and 1014–1034 (LPPS…VLSL). A Phosphoserine modification is found at R1038. The next 2 membrane-spanning stretches (helical) occupy residues 1040–1060 (LMGV…SLAL) and 1170–1190 (LASC…LLKG). The segment at 1210–1235 (SASRQLPPGTVAGRRSQTRRALPPWR) is disordered.

This sequence belongs to the protein kinase superfamily. STE Ser/Thr protein kinase family. STE20 subfamily. As to quaternary structure, self-associates. Interacts with MAP2K3 and MAP2K6. Interacts with tubulins. Interacts with MAP3K7 and interferes with MAP3K7-binding to CHUK and thus prevents NF-kappa-B activation. Isoform 2 interacts with PCDH8; this complex may also include CDH2. The cofactor is Mg(2+). In terms of processing, autophosphorylated. Phosphorylated by ATM. Phosphorylated on Ser-1038 by MAPK14. This phosphorylation is required PCDH8 for endocytosis.

The protein resides in the cytoplasmic vesicle membrane. It localises to the cytoplasm. It is found in the cytoskeleton. Its subcellular location is the cell projection. The protein localises to the dendrite. It carries out the reaction L-seryl-[protein] + ATP = O-phospho-L-seryl-[protein] + ADP + H(+). The enzyme catalyses L-threonyl-[protein] + ATP = O-phospho-L-threonyl-[protein] + ADP + H(+). Moderately inhibited by staurosporine, a broad-range protein kinase inhibitor. Functionally, serine/threonine-protein kinase involved in different processes such as membrane blebbing and apoptotic bodies formation DNA damage response and MAPK14/p38 MAPK stress-activated MAPK cascade. Phosphorylates itself, MBP, activated MAPK8, MAP2K3, MAP2K6 and tubulins. Activates the MAPK14/p38 MAPK signaling pathway through the specific activation and phosphorylation of the upstream MAP2K3 and MAP2K6 kinases. In response to DNA damage, involved in the G2/M transition DNA damage checkpoint by activating the p38/MAPK14 stress-activated MAPK cascade, probably by mediating phosphorylation of upstream MAP2K3 and MAP2K6 kinases. May affect microtubule organization and stability. May play a role in the osmotic stress-MAPK8 pathway. Prevents MAP3K7-mediated activation of CHUK, and thus NF-kappa-B activation. Isoform 2, but not isoform 1, is required for PCDH8 endocytosis. Following homophilic interactions between PCDH8 extracellular domains, isoform 2 phosphorylates and activates MAPK14/p38 MAPK which in turn phosphorylates isoform 2. This process leads to PCDH8 endocytosis and CDH2 cointernalization. Both isoforms are involved in MAPK14/p38 MAPK activation. This is Serine/threonine-protein kinase TAO2 (Taok2) from Rattus norvegicus (Rat).